A 200-amino-acid polypeptide reads, in one-letter code: Small ribosomal subunit protein uS4 (200 aa).

The tract at residues T22–R41 is disordered. The 61-residue stretch at S92–K152 folds into the S4 RNA-binding domain.

This sequence belongs to the universal ribosomal protein uS4 family. As to quaternary structure, part of the 30S ribosomal subunit. Contacts protein S5. The interaction surface between S4 and S5 is involved in control of translational fidelity.

In terms of biological role, one of the primary rRNA binding proteins, it binds directly to 16S rRNA where it nucleates assembly of the body of the 30S subunit. Its function is as follows. With S5 and S12 plays an important role in translational accuracy. In Halalkalibacterium halodurans (strain ATCC BAA-125 / DSM 18197 / FERM 7344 / JCM 9153 / C-125) (Bacillus halodurans), this protein is Small ribosomal subunit protein uS4.